The sequence spans 212 residues: Thiamine-phosphate synthase (212 aa).

Residues 43–47 (QYRNK) and Asn-75 contribute to the 4-amino-2-methyl-5-(diphosphooxymethyl)pyrimidine site. Residues Asp-76 and Asp-95 each contribute to the Mg(2+) site. Residue Ser-114 participates in 4-amino-2-methyl-5-(diphosphooxymethyl)pyrimidine binding. 141 to 143 (SMT) lines the 2-[(2R,5Z)-2-carboxy-4-methylthiazol-5(2H)-ylidene]ethyl phosphate pocket. Residue Lys-144 coordinates 4-amino-2-methyl-5-(diphosphooxymethyl)pyrimidine. Gly-171 lines the 2-[(2R,5Z)-2-carboxy-4-methylthiazol-5(2H)-ylidene]ethyl phosphate pocket.

The protein belongs to the thiamine-phosphate synthase family. The cofactor is Mg(2+).

The catalysed reaction is 2-[(2R,5Z)-2-carboxy-4-methylthiazol-5(2H)-ylidene]ethyl phosphate + 4-amino-2-methyl-5-(diphosphooxymethyl)pyrimidine + 2 H(+) = thiamine phosphate + CO2 + diphosphate. The enzyme catalyses 2-(2-carboxy-4-methylthiazol-5-yl)ethyl phosphate + 4-amino-2-methyl-5-(diphosphooxymethyl)pyrimidine + 2 H(+) = thiamine phosphate + CO2 + diphosphate. It carries out the reaction 4-methyl-5-(2-phosphooxyethyl)-thiazole + 4-amino-2-methyl-5-(diphosphooxymethyl)pyrimidine + H(+) = thiamine phosphate + diphosphate. It participates in cofactor biosynthesis; thiamine diphosphate biosynthesis; thiamine phosphate from 4-amino-2-methyl-5-diphosphomethylpyrimidine and 4-methyl-5-(2-phosphoethyl)-thiazole: step 1/1. In terms of biological role, condenses 4-methyl-5-(beta-hydroxyethyl)thiazole monophosphate (THZ-P) and 2-methyl-4-amino-5-hydroxymethyl pyrimidine pyrophosphate (HMP-PP) to form thiamine monophosphate (TMP). This Nitrosomonas eutropha (strain DSM 101675 / C91 / Nm57) protein is Thiamine-phosphate synthase.